Here is a 155-residue protein sequence, read N- to C-terminus: Small ribosomal subunit protein uS7cz/uS7cy (155 aa).

It belongs to the universal ribosomal protein uS7 family. As to quaternary structure, part of the 30S ribosomal subunit.

Its subcellular location is the plastid. The protein localises to the chloroplast. Functionally, one of the primary rRNA binding proteins, it binds directly to 16S rRNA where it nucleates assembly of the head domain of the 30S subunit. The polypeptide is Small ribosomal subunit protein uS7cz/uS7cy (rps7-A) (Phaseolus vulgaris (Kidney bean)).